An 880-amino-acid chain; its full sequence is Alanine--tRNA ligase (880 aa).

Positions 567, 571, 669, and 673 each coordinate Zn(2+).

It belongs to the class-II aminoacyl-tRNA synthetase family. It depends on Zn(2+) as a cofactor.

Its subcellular location is the cytoplasm. The enzyme catalyses tRNA(Ala) + L-alanine + ATP = L-alanyl-tRNA(Ala) + AMP + diphosphate. Its function is as follows. Catalyzes the attachment of alanine to tRNA(Ala) in a two-step reaction: alanine is first activated by ATP to form Ala-AMP and then transferred to the acceptor end of tRNA(Ala). Also edits incorrectly charged Ser-tRNA(Ala) and Gly-tRNA(Ala) via its editing domain. This is Alanine--tRNA ligase from Bacillus mycoides (strain KBAB4) (Bacillus weihenstephanensis).